Consider the following 349-residue polypeptide: Protein-glutamate methylesterase/protein-glutamine glutaminase (349 aa).

Residues 5–122 form the Response regulatory domain; it reads RVLSVDDSAL…REGMLAYSEM (118 aa). Aspartate 56 bears the 4-aspartylphosphate mark. The CheB-type methylesterase domain occupies 152–344; that stretch reads LLSSEKLIAI…QQMLAKISAG (193 aa). Active-site residues include serine 164, histidine 190, and aspartate 286.

This sequence belongs to the CheB family. In terms of processing, phosphorylated by CheA. Phosphorylation of the N-terminal regulatory domain activates the methylesterase activity.

The protein localises to the cytoplasm. It carries out the reaction [protein]-L-glutamate 5-O-methyl ester + H2O = L-glutamyl-[protein] + methanol + H(+). The catalysed reaction is L-glutaminyl-[protein] + H2O = L-glutamyl-[protein] + NH4(+). Involved in chemotaxis. Part of a chemotaxis signal transduction system that modulates chemotaxis in response to various stimuli. Catalyzes the demethylation of specific methylglutamate residues introduced into the chemoreceptors (methyl-accepting chemotaxis proteins or MCP) by CheR. Also mediates the irreversible deamidation of specific glutamine residues to glutamic acid. This chain is Protein-glutamate methylesterase/protein-glutamine glutaminase, found in Salmonella choleraesuis (strain SC-B67).